Here is a 246-residue protein sequence, read N- to C-terminus: DNA repair protein RecO (246 aa).

The protein belongs to the RecO family.

Involved in DNA repair and RecF pathway recombination. The sequence is that of DNA repair protein RecO from Methylorubrum extorquens (strain PA1) (Methylobacterium extorquens).